We begin with the raw amino-acid sequence, 297 residues long: Homoserine kinase (297 aa).

82–92 (PLTRGLGSSAS) contributes to the ATP binding site.

The protein belongs to the GHMP kinase family. Homoserine kinase subfamily.

It localises to the cytoplasm. It catalyses the reaction L-homoserine + ATP = O-phospho-L-homoserine + ADP + H(+). It functions in the pathway amino-acid biosynthesis; L-threonine biosynthesis; L-threonine from L-aspartate: step 4/5. Functionally, catalyzes the ATP-dependent phosphorylation of L-homoserine to L-homoserine phosphate. This Bacillus thuringiensis subsp. konkukian (strain 97-27) protein is Homoserine kinase.